A 78-amino-acid polypeptide reads, in one-letter code: Spermatid-specific protein T1 (78 aa).

The segment at 1–21 (MKVAANSSKMLAEKLELMKGG) is hydrophobic. Residues 1–78 (MKVAANSSKM…YSRRRYRRRR (78 aa)) form a disordered region. The segment covering 20–78 (GGRRRRRRSRRRRRRSRRRSRSPYRRRYRRRRRRRRRRSRRRRYRRRRSYSRRRYRRRR) has biased composition (basic residues).

Post-translationally, phosphorylation occurs at different degrees. The triphosphorylated form may be predominant in T1. SP1 appears to be phosphorylated in elongated spermatids, but dephosphorylated in mature sperm cells. As to expression, testis.

Its subcellular location is the nucleus. The protein localises to the chromosome. In terms of biological role, cuttlefish spermiogenesis is characterized by a double nuclear protein transition: histones -&gt; spermatid-specific proteins (T1/T2) -&gt; protamines (SP1/SP2). The protamines compact sperm DNA into a highly condensed, stable and inactive complex. This is Spermatid-specific protein T1 from Sepia officinalis (Common cuttlefish).